We begin with the raw amino-acid sequence, 423 residues long: Keratin, type I cytoskeletal 18 (423 aa).

Ser-2 carries the post-translational modification N-acetylserine. The interval 2 to 71 (SFTTRSTTFS…GLAGMGGIQT (70 aa)) is head. Residues Ser-7, Ser-11, Ser-16, and Ser-19 each carry the phosphoserine modification. 2 positions are modified to phosphoserine; alternate: Ser-31 and Ser-32. 2 O-linked (GlcNAc) serine; alternate glycosylation sites follow: Ser-31 and Ser-32. Ser-35 bears the Phosphoserine mark. Tyr-37 carries the post-translational modification Phosphotyrosine. Residue Ser-43 is modified to Phosphoserine. Arg-46 carries the omega-N-methylarginine modification. Ser-50 is modified (phosphoserine; alternate). The O-linked (GlcNAc) serine; alternate glycan is linked to Ser-50. Ser-52 carries the phosphoserine; by MAPKAPK2 and MAPKAPK3 modification. Residues Ser-57 and Ser-60 each carry the phosphoserine modification. A necessary for interaction with PNN region spans residues 62 to 366 (GLAGMGGIQT…EALLNIKVKL (305 aa)). Residues 69 to 121 (IQTEKETMQDLNDRLASYLDKVKSLETENRRLESKIREHLEKKGPQGVRDWGH) are interaction with TRADD. A coil 1A region spans residues 72 to 107 (EKETMQDLNDRLASYLDKVKSLETENRRLESKIREH). An IF rod domain is found at 72–384 (EKETMQDLND…RLLEDGEDFS (313 aa)). A Glycyl lysine isopeptide (Lys-Gly) (interchain with G-Cter in SUMO2) cross-link involves residue Lys-73. A phosphoserine mark is found at Ser-85 and Ser-92. The tract at residues 108–125 (LEKKGPQGVRDWGHYFKI) is linker 1. Position 124 is an N6-acetyllysine (Lys-124). A coil 1B region spans residues 126–217 (IEDLRAQIFA…KNHEEEVQGL (92 aa)). 2 positions are modified to phosphoserine: Ser-137 and Ser-170. Positions 218–241 (EAQIASSGLTVEVDAPKSQDLSKI) are linker 12. Residues 236-384 (QDLSKIMADI…RLLEDGEDFS (149 aa)) form an interaction with DNAJB6 region. Residue Lys-240 forms a Glycyl lysine isopeptide (Lys-Gly) (interchain with G-Cter in SUMO2) linkage. The tract at residues 242–380 (MADIRAQYEA…ATYRRLLEDG (139 aa)) is coil 2. Thr-295 carries the post-translational modification Phosphothreonine. Residue Ser-316 is modified to Phosphoserine. Residues Lys-363 and Lys-365 each participate in a glycyl lysine isopeptide (Lys-Gly) (interchain with G-Cter in SUMO2) cross-link. Residues 381 to 423 (EDFSLNDALDSSNSMQTVQKTTTRKIVDGRVVSETNDTRVLRH) form a tail region. A phosphoserine mark is found at Ser-384, Ser-391, Ser-392, and Ser-394. Phosphothreonine is present on Thr-397.

The protein belongs to the intermediate filament family. In terms of assembly, heterotetramer of two type I and two type II keratins. KRT18 associates with KRT8. Interacts with PLEC isoform 1C, when in a heterodimer with KRT8. Interacts with PNN and mutated CFTR. Interacts with YWHAE, YWHAH and YWHAZ only when phosphorylated. Interacts with the thrombin-antithrombin complex. Interacts with DNAJB6, TCHP and TRADD. Interacts with FAM83H. Interacts with EPPK1. Interacts with PKP1 and PKP2. In terms of processing, phosphorylation increases by IL-6. Post-translationally, proteolytically cleaved by caspases during epithelial cell apoptosis. Cleavage occurs at Asp-231 by either caspase-3, caspas-6 or caspase-7. O-GlcNAcylation increases solubility, and decreases stability by inducing proteasomal degradation. In terms of tissue distribution, expressed in endoderm, intestinal epithelial cells and in most extraembryonic tissues.

The protein resides in the nucleus matrix. It is found in the cytoplasm. The protein localises to the perinuclear region. It localises to the nucleus. Its subcellular location is the nucleolus. When phosphorylated, plays a role in filament reorganization. Involved in the delivery of mutated CFTR to the plasma membrane. Involved in the uptake of thrombin-antithrombin complexes by hepatic cells. Together with KRT8, is involved in interleukin-6 (IL-6)-mediated barrier protection. The sequence is that of Keratin, type I cytoskeletal 18 (Krt18) from Mus musculus (Mouse).